The chain runs to 204 residues: Cobalt-containing nitrile hydratase subunit alpha (204 aa).

The Co(2+) site is built by cysteine 108, cysteine 111, serine 112, and cysteine 113. A Cysteine sulfinic acid (-SO2H) modification is found at cysteine 111. At cysteine 113 the chain carries Cysteine sulfenic acid (-SOH).

The protein belongs to the nitrile hydratase subunit alpha family. Heterotetramer of two alpha and two beta chains. Co(2+) is required as a cofactor.

The enzyme catalyses an aliphatic primary amide = an aliphatic nitrile + H2O. In terms of biological role, NHase catalyzes the hydration of various nitrile compounds to the corresponding amides. This Pseudonocardia thermophila protein is Cobalt-containing nitrile hydratase subunit alpha.